Here is a 410-residue protein sequence, read N- to C-terminus: Neuroserpin (410 aa).

The N-terminal stretch at 1–16 (MYFLGLLSLLVLPSKA) is a signal peptide. Asparagine 157 and asparagine 401 each carry an N-linked (GlcNAc...) asparagine glycan.

The protein belongs to the serpin family. As to expression, detected in embryonic ocular vitreous fluid (at protein level). In the embryo present in retina, brain, cerebellum and spinal cord. In adult, predominantly expressed in the brain.

It localises to the secreted. Its subcellular location is the cytoplasmic vesicle. The protein resides in the secretory vesicle lumen. The protein localises to the perikaryon. Functionally, serine protease inhibitor that inhibits plasminogen activators and plasmin but not thrombin. May be involved in the formation or reorganization of synaptic connections as well as for synaptic plasticity in the adult nervous system. May protect neurons from cell damage by tissue-type plasminogen activator. The protein is Neuroserpin (SERPINI1) of Gallus gallus (Chicken).